Consider the following 296-residue polypeptide: Protoheme IX farnesyltransferase (296 aa).

A run of 9 helical transmembrane segments spans residues 11–31, 35–55, 84–104, 107–127, 132–152, 162–182, 208–228, 229–249, and 264–284; these read PGII…AAQG, YPLF…GCVF, VTLV…YIAA, LAMW…SLYM, VYGT…GYCA, LILL…IAIF, ITLY…GGYA, GYKY…MALS, and LFVF…VDSM.

The protein belongs to the UbiA prenyltransferase family. Protoheme IX farnesyltransferase subfamily.

The protein resides in the cell inner membrane. It carries out the reaction heme b + (2E,6E)-farnesyl diphosphate + H2O = Fe(II)-heme o + diphosphate. Its pathway is porphyrin-containing compound metabolism; heme O biosynthesis; heme O from protoheme: step 1/1. In terms of biological role, converts heme B (protoheme IX) to heme O by substitution of the vinyl group on carbon 2 of heme B porphyrin ring with a hydroxyethyl farnesyl side group. This is Protoheme IX farnesyltransferase from Pectobacterium carotovorum subsp. carotovorum (strain PC1).